The sequence spans 578 residues: Putative diflavin flavoprotein A 2 (578 aa).

The segment at 48 to 240 (RHGTTYNSFL…LQVVLVATGH (193 aa)) is zinc metallo-hydrolase. Fe cation-binding residues include H97, E99, D101, H164, D183, and H240. The Flavodoxin-like domain occupies 269–406 (VALFYVDGYG…LCREAGTDLG (138 aa)). Residues 429–578 (IGRLSTGLYI…THHRKLGNHY (150 aa)) form a flavodoxin-reductase-like region.

This sequence in the N-terminal section; belongs to the zinc metallo-hydrolase group 3 family. In the C-terminal section; belongs to the flavodoxin reductase family. Fe cation serves as cofactor.

Functionally, mediates electron transfer from NADH to oxygen, reducing it to water. This modular protein has 3 redox cofactors, in other organisms the same activity requires 2 or 3 proteins. In Synechocystis sp. (strain ATCC 27184 / PCC 6803 / Kazusa), this protein is Putative diflavin flavoprotein A 2 (dfa2).